A 156-amino-acid polypeptide reads, in one-letter code: Jun dimerization protein 2 (156 aa).

The segment at 56–95 is disordered; that stretch reads KRPFDAIKSEDDDDDERKKRRREKNKVAAARCRNRKKERT. The bZIP domain occupies 70–133; that stretch reads DERKKRRREK…QQLIVMLNLH (64 aa). The basic motif stretch occupies residues 72–94; sequence RKKRRREKNKVAAARCRNRKKER. A leucine-zipper region spans residues 98–126; the sequence is LQKESERLEMLNSDLKSQIEELKSERQQL.

The protein belongs to the bZIP family. ATF subfamily.

It is found in the nucleus. Functionally, component of the AP-1 transcription factor that represses transactivation mediated by the Jun family of proteins. The sequence is that of Jun dimerization protein 2 (jdp2) from Danio rerio (Zebrafish).